The primary structure comprises 503 residues: Probable cytochrome P450 303a1 (503 aa).

Cysteine 448 serves as a coordination point for heme.

The protein belongs to the cytochrome P450 family. It depends on heme as a cofactor.

It localises to the endoplasmic reticulum membrane. The protein resides in the microsome membrane. Its function is as follows. May be involved in the metabolism of insect hormones and in the breakdown of synthetic insecticides. In Drosophila melanogaster (Fruit fly), this protein is Probable cytochrome P450 303a1 (Cyp303a1).